We begin with the raw amino-acid sequence, 234 residues long: Immune-associated nucleotide-binding protein 2 (234 aa).

The AIG1-type G domain maps to 21–223; it reads KPVKNIVLVG…YTEDMYRNIK (203 aa). GTP is bound by residues 30–38, serine 51, and asparagine 183; that span reads GRSVNGICT.

This sequence belongs to the TRAFAC class TrmE-Era-EngA-EngB-Septin-like GTPase superfamily. AIG1/Toc34/Toc159-like paraseptin GTPase family. IAN subfamily. As to expression, mostly expressed in pollen. Also detected in lateral roots and radicles.

This chain is Immune-associated nucleotide-binding protein 2, found in Arabidopsis thaliana (Mouse-ear cress).